Here is a 497-residue protein sequence, read N- to C-terminus: NAD(P)H-quinone oxidoreductase subunit 2, chloroplastic (497 aa).

14 consecutive transmembrane segments (helical) span residues valine 13–isoleucine 33, serine 37–phenylalanine 57, phenylalanine 76–threonine 96, glycine 103–leucine 123, leucine 129–tyrosine 149, leucine 164–leucine 184, isoleucine 206–phenylalanine 226, proline 240–threonine 260, tryptophan 274–alanine 294, alanine 311–threonine 331, tyrosine 332–leucine 352, alanine 373–phenylalanine 393, glycine 406–leucine 426, and valine 462–isoleucine 482.

This sequence belongs to the complex I subunit 2 family. NDH is composed of at least 16 different subunits, 5 of which are encoded in the nucleus.

Its subcellular location is the plastid. It is found in the chloroplast thylakoid membrane. It catalyses the reaction a plastoquinone + NADH + (n+1) H(+)(in) = a plastoquinol + NAD(+) + n H(+)(out). The catalysed reaction is a plastoquinone + NADPH + (n+1) H(+)(in) = a plastoquinol + NADP(+) + n H(+)(out). Functionally, NDH shuttles electrons from NAD(P)H:plastoquinone, via FMN and iron-sulfur (Fe-S) centers, to quinones in the photosynthetic chain and possibly in a chloroplast respiratory chain. The immediate electron acceptor for the enzyme in this species is believed to be plastoquinone. Couples the redox reaction to proton translocation, and thus conserves the redox energy in a proton gradient. This Zygnema circumcarinatum (Green alga) protein is NAD(P)H-quinone oxidoreductase subunit 2, chloroplastic.